The following is a 278-amino-acid chain: Shikimate dehydrogenase (NADP(+)) (278 aa).

Shikimate contacts are provided by residues 19 to 21 (SLS) and Thr-66. Lys-70 acts as the Proton acceptor in catalysis. The shikimate site is built by Asn-91 and Asp-106. NADP(+)-binding positions include 130–134 (GAGGS), 152–157 (NRTVEK), and Leu-222. Tyr-224 is a shikimate binding site. Gly-245 is an NADP(+) binding site.

Belongs to the shikimate dehydrogenase family. As to quaternary structure, homodimer.

It carries out the reaction shikimate + NADP(+) = 3-dehydroshikimate + NADPH + H(+). The protein operates within metabolic intermediate biosynthesis; chorismate biosynthesis; chorismate from D-erythrose 4-phosphate and phosphoenolpyruvate: step 4/7. Involved in the biosynthesis of the chorismate, which leads to the biosynthesis of aromatic amino acids. Catalyzes the reversible NADPH linked reduction of 3-dehydroshikimate (DHSA) to yield shikimate (SA). In Methanococcus aeolicus (strain ATCC BAA-1280 / DSM 17508 / OCM 812 / Nankai-3), this protein is Shikimate dehydrogenase (NADP(+)).